Here is a 386-residue protein sequence, read N- to C-terminus: Succinate--CoA ligase [ADP-forming] subunit beta (386 aa).

The 236-residue stretch at Lys9–Arg244 folds into the ATP-grasp domain. ATP-binding positions include Lys46, Gly53–Gly55, Glu99, Thr102, and Glu107. 2 residues coordinate Mg(2+): Asn199 and Asp213. Residues Asn264 and Gly321–Val323 contribute to the substrate site.

This sequence belongs to the succinate/malate CoA ligase beta subunit family. In terms of assembly, heterotetramer of two alpha and two beta subunits. Requires Mg(2+) as cofactor.

The enzyme catalyses succinate + ATP + CoA = succinyl-CoA + ADP + phosphate. The catalysed reaction is GTP + succinate + CoA = succinyl-CoA + GDP + phosphate. It functions in the pathway carbohydrate metabolism; tricarboxylic acid cycle; succinate from succinyl-CoA (ligase route): step 1/1. Succinyl-CoA synthetase functions in the citric acid cycle (TCA), coupling the hydrolysis of succinyl-CoA to the synthesis of either ATP or GTP and thus represents the only step of substrate-level phosphorylation in the TCA. The beta subunit provides nucleotide specificity of the enzyme and binds the substrate succinate, while the binding sites for coenzyme A and phosphate are found in the alpha subunit. The protein is Succinate--CoA ligase [ADP-forming] subunit beta of Thioalkalivibrio sulfidiphilus (strain HL-EbGR7).